Consider the following 142-residue polypeptide: Hemoglobin subunit alpha-A (142 aa).

The Globin domain maps to Val-2–Arg-142. Residue His-59 participates in O2 binding. His-88 serves as a coordination point for heme b.

It belongs to the globin family. As to quaternary structure, heterotetramer of two alpha chains and two beta chains. In terms of tissue distribution, red blood cells.

Functionally, involved in oxygen transport from the lung to the various peripheral tissues. This Cairina moschata (Muscovy duck) protein is Hemoglobin subunit alpha-A (HBAA).